The chain runs to 255 residues: Large ribosomal subunit protein uL4 (255 aa).

The protein belongs to the universal ribosomal protein uL4 family. In terms of assembly, part of the 50S ribosomal subunit.

In terms of biological role, one of the primary rRNA binding proteins, this protein initially binds near the 5'-end of the 23S rRNA. It is important during the early stages of 50S assembly. It makes multiple contacts with different domains of the 23S rRNA in the assembled 50S subunit and ribosome. Forms part of the polypeptide exit tunnel. In Pyrococcus horikoshii (strain ATCC 700860 / DSM 12428 / JCM 9974 / NBRC 100139 / OT-3), this protein is Large ribosomal subunit protein uL4.